A 170-amino-acid polypeptide reads, in one-letter code: Elicitin-like protein 1 (170 aa).

Residues 1–19 (MFSKTLVVLAAVAAVTVNG) form the signal peptide. Intrachain disulfides connect Cys-25–Cys-91, Cys-47–Cys-76, and Cys-71–Cys-118. Residues 122 to 170 (GGGSTPTTAPPTSTTPTTAPPTGTTPTTAPPAGTTPGVTPSPTTPKPAC) form a disordered region. Positions 126-162 (TPTTAPPTSTTPTTAPPTGTTPTTAPPAGTTPGVTPS) are enriched in low complexity.

It belongs to the elicitin family.

The protein localises to the secreted. In terms of biological role, induces local and distal defense responses (incompatible hypersensitive reaction) in plants from the solanaceae and cruciferae families. Elicits leaf necrosis and causes the accumulation of pathogenesis-related proteins. Might interact with the lipidic molecules of the plasma membrane. The chain is Elicitin-like protein 1 (POD-1) from Pythium oligandrum (Mycoparasitic fungus).